The following is a 934-amino-acid chain: Translation initiation factor IF-2 (934 aa).

The tract at residues Ala-54–Ala-323 is disordered. Composition is skewed to low complexity over residues Pro-80–Pro-154, Arg-185–Gly-197, Gly-206–Ala-231, and Arg-238–Pro-250. Gly residues predominate over residues Gly-260–Pro-303. Residues Arg-308–Lys-317 show a composition bias toward basic residues. Residues Gln-430–Asp-602 form the tr-type G domain. The G1 stretch occupies residues Gly-439–Thr-446. Gly-439–Thr-446 provides a ligand contact to GTP. Positions Gly-464 to His-468 are G2. A G3 region spans residues Asp-489 to Gly-492. Residues Asp-489 to His-493 and Asn-543 to Asp-546 contribute to the GTP site. The segment at Asn-543 to Asp-546 is G4. Positions Ser-579–Lys-581 are G5.

Belongs to the TRAFAC class translation factor GTPase superfamily. Classic translation factor GTPase family. IF-2 subfamily.

Its subcellular location is the cytoplasm. Functionally, one of the essential components for the initiation of protein synthesis. Protects formylmethionyl-tRNA from spontaneous hydrolysis and promotes its binding to the 30S ribosomal subunits. Also involved in the hydrolysis of GTP during the formation of the 70S ribosomal complex. The protein is Translation initiation factor IF-2 of Corynebacterium urealyticum (strain ATCC 43042 / DSM 7109).